We begin with the raw amino-acid sequence, 165 residues long: 3-hydroxyacyl-[acyl-carrier-protein] dehydratase FabZ (165 aa).

H68 is a catalytic residue.

The protein belongs to the thioester dehydratase family. FabZ subfamily.

The protein localises to the cytoplasm. It catalyses the reaction a (3R)-hydroxyacyl-[ACP] = a (2E)-enoyl-[ACP] + H2O. In terms of biological role, involved in unsaturated fatty acids biosynthesis. Catalyzes the dehydration of short chain beta-hydroxyacyl-ACPs and long chain saturated and unsaturated beta-hydroxyacyl-ACPs. This is 3-hydroxyacyl-[acyl-carrier-protein] dehydratase FabZ from Methylobacterium sp. (strain 4-46).